The sequence spans 212 residues: Orotate phosphoribosyltransferase (212 aa).

5-phospho-alpha-D-ribose 1-diphosphate contacts are provided by residues Arg97, Lys101, His103, and 123-131 (EDLISTGGS). Ser127 contributes to the orotate binding site.

It belongs to the purine/pyrimidine phosphoribosyltransferase family. PyrE subfamily. Homodimer. Requires Mg(2+) as cofactor.

The catalysed reaction is orotidine 5'-phosphate + diphosphate = orotate + 5-phospho-alpha-D-ribose 1-diphosphate. Its pathway is pyrimidine metabolism; UMP biosynthesis via de novo pathway; UMP from orotate: step 1/2. Catalyzes the transfer of a ribosyl phosphate group from 5-phosphoribose 1-diphosphate to orotate, leading to the formation of orotidine monophosphate (OMP). This Bacteroides fragilis (strain ATCC 25285 / DSM 2151 / CCUG 4856 / JCM 11019 / LMG 10263 / NCTC 9343 / Onslow / VPI 2553 / EN-2) protein is Orotate phosphoribosyltransferase.